A 286-amino-acid chain; its full sequence is Hydroxysteroid 11-beta-dehydrogenase 1-like protein (286 aa).

The N-terminal stretch at 1–17 (MGIHIKRWCFIILVASA) is a signal peptide. Residues 39–65 (GASTGIGEEIAYHYARAGAKLVLTARR), 90–91 (DM), and 117–119 (NHI) contribute to the NADP(+) site. Ser168 is a substrate binding site. Tyr181 acts as the Proton acceptor in catalysis. NADP(+) is bound by residues 181-185 (YAASK) and 214-220 (GLIDTQS).

It belongs to the short-chain dehydrogenases/reductases (SDR) family.

The protein localises to the secreted. It carries out the reaction cortisone + NADPH + H(+) = cortisol + NADP(+). Unidirectional NADP(+)-dependent cortisol dehydrogenase (in vitro). The protein is Hydroxysteroid 11-beta-dehydrogenase 1-like protein (hsd11b1l) of Xenopus tropicalis (Western clawed frog).